The chain runs to 177 residues: MRSRKGRGARRWMSHENGVAVHGNVGVEGARKFLESRCVLKEAEGGEICWSVIVEKKVDDIRVKGEQHGGFLCAGMWGDFVGTGEERIAGRDRTEEAHVTGKEGKVFRRQGVEGGTLRVRLEKCRIVGWGMYGGPGVVRVFCARSGAHSALSAKRAQAAYLAMWPSIGCISFRVCPA.

This is an uncharacterized protein from Treponema pallidum (strain Nichols).